A 164-amino-acid chain; its full sequence is Ribosome maturation factor RimM (164 aa).

Residues 93–164 (DSEYYVANLN…FVVIVPPEFI (72 aa)) form the PRC barrel domain.

Belongs to the RimM family. As to quaternary structure, binds ribosomal protein uS19.

Its subcellular location is the cytoplasm. Its function is as follows. An accessory protein needed during the final step in the assembly of 30S ribosomal subunit, possibly for assembly of the head region. Essential for efficient processing of 16S rRNA. May be needed both before and after RbfA during the maturation of 16S rRNA. It has affinity for free ribosomal 30S subunits but not for 70S ribosomes. This Orientia tsutsugamushi (strain Boryong) (Rickettsia tsutsugamushi) protein is Ribosome maturation factor RimM.